The primary structure comprises 63 residues: Large ribosomal subunit protein uL30 (63 aa).

The protein belongs to the universal ribosomal protein uL30 family. In terms of assembly, part of the 50S ribosomal subunit.

This Rickettsia africae (strain ESF-5) protein is Large ribosomal subunit protein uL30.